A 454-amino-acid chain; its full sequence is Tubulin gamma chain (454 aa).

142 to 148 provides a ligand contact to GTP; the sequence is AGGTGSG.

It belongs to the tubulin family.

The protein localises to the cytoplasm. It localises to the cytoskeleton. Its subcellular location is the microtubule organizing center. The protein resides in the spindle pole body. Tubulin is the major constituent of microtubules. The gamma chain is found at microtubule organizing centers (MTOC) such as the spindle pole or the centrosome, suggesting that it is involved in the minus-end nucleation of microtubule assembly. Interacts physically with beta-tubulin and is involved in microtubule function. This Emericella nidulans (strain FGSC A4 / ATCC 38163 / CBS 112.46 / NRRL 194 / M139) (Aspergillus nidulans) protein is Tubulin gamma chain (mipA).